The following is a 105-amino-acid chain: MSPFKKTYVLKLYVAGNTPNSVRALKMLKNILEQEFQGVYALKVIDVLKNPQLAEEDKILATPTLAKILPPPVRKIIGDLSDREKVLIGLDLLYDEIREREAEDQ.

The protein belongs to the KaiB family. In terms of assembly, homotetramer in solution and crystals formed by 2 dimers. Only elutes as a homotetramer in size exclusion chromatography, interacts with KaiC1 and KaiC3. The KaiABC complex composition changes during the circadian cycle to control KaiC phosphorylation. Complexes KaiC(6), KaiA(2-4):KaiC(6), KaiB(6):KaiC(6) and KaiC(6):KaiB(6):KaiA(12) are among the most important forms, many form cooperatively. Undergoes a major conformational rearrangment; in the free state forms homotetramers as a dimer of dimers. When bound to the CI domain of KaiC switches to a monomeric thioredoxin-fold (KaiB(fs)). KaiB(fs) binds CikA, leading it to dephosphorylate phospho-RpaA.

Its function is as follows. Key component of the KaiABC oscillator complex, which constitutes the main circadian regulator in cyanobacteria. Complex composition changes during the circadian cycle to control KaiC phosphorylation. KaiA stimulates KaiC autophosphorylation, while KaiB sequesters KaiA, leading to KaiC autodephosphorylation. Phospho-Ser-431 KaiC accumulation triggers binding of KaiB to form the KaiB(6):KaiC(6) complex, leading to changes in output regulators CikA and SasA. KaiB switches to a thioredoxin-like fold (KaiB(fs)) when bound to KaiC. KaiB(6):KaiC(6) formation exposes a site for KaiA binding that sequesters KaiA from KaiC, making the KaiC(6):KaiB(6):KaiA(12) complex that results in KaiC autodephosphorylation. Component of the oscillator and circadian clock in this organism, enhances fitness in a rhythmic environment. The homotetramer reduces the ATPase activity of KaiC3 by 35%. Functionally, a metamorphic protein which reversibly switches between an inactive tetrameric fold and a rare, thioredoxin-like monomeric fold (KaiB(fs)). KaiB(fs) binds phospho-KaiC, KaiA and CikA. KaiA and CikA compete for binding to KaiB(fs), and KaiB(fs) and SasA compete for binding to KaiC, thus the clock oscillator and output signal pathway are tightly coupled. This Synechocystis sp. (strain ATCC 27184 / PCC 6803 / Kazusa) protein is Circadian clock oscillator protein KaiB1.